We begin with the raw amino-acid sequence, 95 residues long: Large ribosomal subunit protein uL23 (95 aa).

The protein belongs to the universal ribosomal protein uL23 family. In terms of assembly, part of the 50S ribosomal subunit. Contacts protein L29, and trigger factor when it is bound to the ribosome.

One of the early assembly proteins it binds 23S rRNA. One of the proteins that surrounds the polypeptide exit tunnel on the outside of the ribosome. Forms the main docking site for trigger factor binding to the ribosome. The sequence is that of Large ribosomal subunit protein uL23 from Bacillus licheniformis (strain ATCC 14580 / DSM 13 / JCM 2505 / CCUG 7422 / NBRC 12200 / NCIMB 9375 / NCTC 10341 / NRRL NRS-1264 / Gibson 46).